Here is a 385-residue protein sequence, read N- to C-terminus: MLRVSENGLRFLLKCHSTNVSMFNRLLSTQIKEGRSSIDDAGIIPDGTINERPNHYIEGITKGSDLDLLEKGIRKTDEMTSNFTNYMYKFHRLPPNYGSNQLITIDKELQKELDGVMSSFKAPCRFVFGYGSGVFEQAGYSKSHSKPQIDIILGVTYPSHFHSINMRQNPQHYSSLKYFGSEFVSKFQQIGAGVYFNPFANINGHDVKYGVVSMETLLKDIATWNTFYLAGRLQKPVKILKNDLRVQYWNQLNLKAAATLAKHYTLEKNNNKFDEFQFYKEITALSYAGDIRYKLGGENPDKVNNIVTKNFERFQEYYKPIYKEVVLNDSFYLPKGFTLKNTQRLLLSRISKSSALQTIKGVFTAGITKSIKYAWAKKLKSMRRS.

It belongs to the TAM41 family. It depends on Mg(2+) as a cofactor. Requires Co(2+) as cofactor. Cu(2+) is required as a cofactor.

The protein resides in the mitochondrion inner membrane. The catalysed reaction is a 1,2-diacyl-sn-glycero-3-phosphate + CTP + H(+) = a CDP-1,2-diacyl-sn-glycerol + diphosphate. Its pathway is phospholipid metabolism; CDP-diacylglycerol biosynthesis; CDP-diacylglycerol from sn-glycerol 3-phosphate: step 3/3. Functionally, catalyzes the formation of CDP-diacylglycerol (CDP-DAG) from phosphatidic acid (PA) in the mitochondrial inner membrane. Required for the biosynthesis of the dimeric phospholipid cardiolipin, which stabilizes supercomplexes of the mitochondrial respiratory chain in the mitochondrial inner membrane. This chain is Phosphatidate cytidylyltransferase, mitochondrial (TAM41), found in Saccharomyces cerevisiae (strain ATCC 204508 / S288c) (Baker's yeast).